Reading from the N-terminus, the 294-residue chain is Ethanolamine ammonia-lyase small subunit (294 aa).

Adenosylcob(III)alamin-binding residues include Val-207 and Glu-228.

The protein belongs to the EutC family. In terms of assembly, the basic unit is a heterodimer which dimerizes to form tetramers. The heterotetramers trimerize; 6 large subunits form a core ring with 6 small subunits projecting outwards. Adenosylcob(III)alamin serves as cofactor.

The protein localises to the bacterial microcompartment. The catalysed reaction is ethanolamine = acetaldehyde + NH4(+). The protein operates within amine and polyamine degradation; ethanolamine degradation. In terms of biological role, catalyzes the deamination of various vicinal amino-alcohols to oxo compounds. Allows this organism to utilize ethanolamine as the sole source of nitrogen and carbon in the presence of external vitamin B12. In Clostridium tetani (strain Massachusetts / E88), this protein is Ethanolamine ammonia-lyase small subunit.